Here is a 297-residue protein sequence, read N- to C-terminus: Pyrroline-5-carboxylate reductase 1 (297 aa).

Belongs to the pyrroline-5-carboxylate reductase family.

It is found in the cytoplasm. The catalysed reaction is L-proline + NADP(+) = (S)-1-pyrroline-5-carboxylate + NADPH + 2 H(+). It carries out the reaction L-proline + NAD(+) = (S)-1-pyrroline-5-carboxylate + NADH + 2 H(+). It functions in the pathway amino-acid biosynthesis; L-proline biosynthesis; L-proline from L-glutamate 5-semialdehyde: step 1/1. In terms of biological role, catalyzes the reduction of 1-pyrroline-5-carboxylate (PCA) to L-proline. This is Pyrroline-5-carboxylate reductase 1 (proH) from Bacillus subtilis (strain 168).